The following is a 175-amino-acid chain: ATP synthase subunit b (175 aa).

The helical transmembrane segment at 24 to 44 (LVLWQIAATVILIIVVRIFLW) threads the bilayer.

The protein belongs to the ATPase B chain family. F-type ATPases have 2 components, F(1) - the catalytic core - and F(0) - the membrane proton channel. F(1) has five subunits: alpha(3), beta(3), gamma(1), delta(1), epsilon(1). F(0) has three main subunits: a(1), b(2) and c(10-14). The alpha and beta chains form an alternating ring which encloses part of the gamma chain. F(1) is attached to F(0) by a central stalk formed by the gamma and epsilon chains, while a peripheral stalk is formed by the delta and b chains.

It is found in the cell membrane. Functionally, f(1)F(0) ATP synthase produces ATP from ADP in the presence of a proton or sodium gradient. F-type ATPases consist of two structural domains, F(1) containing the extramembraneous catalytic core and F(0) containing the membrane proton channel, linked together by a central stalk and a peripheral stalk. During catalysis, ATP synthesis in the catalytic domain of F(1) is coupled via a rotary mechanism of the central stalk subunits to proton translocation. Its function is as follows. Component of the F(0) channel, it forms part of the peripheral stalk, linking F(1) to F(0). The sequence is that of ATP synthase subunit b from Acholeplasma laidlawii (strain PG-8A).